The sequence spans 1391 residues: DNA-directed RNA polymerase subunit beta' (1391 aa).

Zn(2+) is bound by residues Cys70, Cys72, Cys85, and Cys88. Mg(2+) is bound by residues Asp461, Asp463, and Asp465. Zn(2+) is bound by residues Cys809, Cys882, Cys889, and Cys892.

It belongs to the RNA polymerase beta' chain family. The RNAP catalytic core consists of 2 alpha, 1 beta, 1 beta' and 1 omega subunit. When a sigma factor is associated with the core the holoenzyme is formed, which can initiate transcription. Mg(2+) is required as a cofactor. The cofactor is Zn(2+).

The enzyme catalyses RNA(n) + a ribonucleoside 5'-triphosphate = RNA(n+1) + diphosphate. Its function is as follows. DNA-dependent RNA polymerase catalyzes the transcription of DNA into RNA using the four ribonucleoside triphosphates as substrates. This is DNA-directed RNA polymerase subunit beta' from Zymomonas mobilis subsp. mobilis (strain ATCC 31821 / ZM4 / CP4).